Consider the following 152-residue polypeptide: Transcriptional regulator MraZ (152 aa).

SpoVT-AbrB domains follow at residues 5–52 (ATLV…PLPE) and 81–124 (ASEC…DETT).

It belongs to the MraZ family. As to quaternary structure, dodecamer.

The protein localises to the cytoplasm. Its subcellular location is the nucleoid. Functionally, negatively regulates its own expression and that of the subsequent genes in the proximal part of the division and cell wall (dcw) gene cluster. Acts by binding directly to DNA. May also regulate the expression of genes outside the dcw cluster. The protein is Transcriptional regulator MraZ of Escherichia coli (strain K12).